The chain runs to 444 residues: UDP-N-acetylmuramate--L-alanine ligase (444 aa).

110–116 (GAHGKTS) serves as a coordination point for ATP.

This sequence belongs to the MurCDEF family.

It localises to the cytoplasm. It carries out the reaction UDP-N-acetyl-alpha-D-muramate + L-alanine + ATP = UDP-N-acetyl-alpha-D-muramoyl-L-alanine + ADP + phosphate + H(+). It participates in cell wall biogenesis; peptidoglycan biosynthesis. Functionally, cell wall formation. This Streptococcus sanguinis (strain SK36) protein is UDP-N-acetylmuramate--L-alanine ligase.